Reading from the N-terminus, the 303-residue chain is Ornithine carbamoyltransferase (303 aa).

Carbamoyl phosphate is bound by residues 52–55, glutamine 79, arginine 103, and 130–133; these read STRT and HPCQ. Residues asparagine 161, aspartate 221, and 225 to 226 contribute to the L-ornithine site; that span reads SM. Residues 260–261 and arginine 288 contribute to the carbamoyl phosphate site; that span reads CL.

The protein belongs to the aspartate/ornithine carbamoyltransferase superfamily. OTCase family.

The protein localises to the cytoplasm. The enzyme catalyses carbamoyl phosphate + L-ornithine = L-citrulline + phosphate + H(+). It functions in the pathway amino-acid biosynthesis; L-arginine biosynthesis; L-arginine from L-ornithine and carbamoyl phosphate: step 1/3. Reversibly catalyzes the transfer of the carbamoyl group from carbamoyl phosphate (CP) to the N(epsilon) atom of ornithine (ORN) to produce L-citrulline. The protein is Ornithine carbamoyltransferase (argF) of Rhizobium meliloti (strain 1021) (Ensifer meliloti).